A 358-amino-acid polypeptide reads, in one-letter code: Phospho-N-acetylmuramoyl-pentapeptide-transferase (358 aa).

The next 10 membrane-spanning stretches (helical) occupy residues 3 to 23, 54 to 74, 84 to 104, 114 to 134, 156 to 176, 187 to 207, 231 to 251, 255 to 275, 283 to 303, and 330 to 350; these read QILFAAAIALTVSILLTPALI, GVAILIGMWAGYLGSHLIGIA, ALLVLGLATALGAVGFIDDFI, LTAAGKYLGQLTAAIVFGVLA, ITTVSMGVIVFLAFVSLVVVA, LDGLAAGSMSLVLGGYVIITF, LALVCAAGTAACIGFLWWNAA, IFMGDTGSLALGGLLAGLSIT, VVIGALFVAEAASVVLQVAVF, and VIIRFWLLAAMASAFGLGLFY.

The protein belongs to the glycosyltransferase 4 family. MraY subfamily. Requires Mg(2+) as cofactor.

It localises to the cell membrane. It catalyses the reaction UDP-N-acetyl-alpha-D-muramoyl-L-alanyl-gamma-D-glutamyl-meso-2,6-diaminopimeloyl-D-alanyl-D-alanine + di-trans,octa-cis-undecaprenyl phosphate = di-trans,octa-cis-undecaprenyl diphospho-N-acetyl-alpha-D-muramoyl-L-alanyl-D-glutamyl-meso-2,6-diaminopimeloyl-D-alanyl-D-alanine + UMP. It functions in the pathway cell wall biogenesis; peptidoglycan biosynthesis. Functionally, catalyzes the initial step of the lipid cycle reactions in the biosynthesis of the cell wall peptidoglycan: transfers peptidoglycan precursor phospho-MurNAc-pentapeptide from UDP-MurNAc-pentapeptide onto the lipid carrier undecaprenyl phosphate, yielding undecaprenyl-pyrophosphoryl-MurNAc-pentapeptide, known as lipid I. This chain is Phospho-N-acetylmuramoyl-pentapeptide-transferase, found in Nocardia farcinica (strain IFM 10152).